A 416-amino-acid polypeptide reads, in one-letter code: Actin-like protein 9 (416 aa).

The interval 1 to 23 (MDPNQGNPLEPQDSPEIPKPSLN) is disordered.

The protein belongs to the actin family. As to quaternary structure, interacts with ACTL7A.

The protein resides in the cytoplasmic vesicle. Its subcellular location is the secretory vesicle. The protein localises to the acrosome. It localises to the cytoplasm. It is found in the cytoskeleton. The protein resides in the perinuclear theca. In terms of biological role, testis-specic protein that plays an important role in fusion of proacrosomal vesicles and perinuclear theca formation. This Bos taurus (Bovine) protein is Actin-like protein 9 (ACTL9).